We begin with the raw amino-acid sequence, 499 residues long: Sensor histidine kinase VxrA (499 aa).

The Cytoplasmic portion of the chain corresponds to Met-1–Asn-12. Residues Ile-13 to Leu-31 traverse the membrane as a helical segment. The Periplasmic segment spans residues Pro-32–Asp-257. Intrachain disulfides connect Cys-101–Cys-122 and Cys-241–Cys-249. Residues Leu-258 to Tyr-280 form a helical membrane-spanning segment. The Cytoplasmic portion of the chain corresponds to Arg-281 to Arg-499. Residues Ile-298 to Thr-494 enclose the Histidine kinase domain. His-301 is modified (phosphohistidine; by autocatalysis).

As to quaternary structure, homodimer. In terms of processing, autophosphorylated. Contains two disulfide bonds that may play a role in the stability of the protein. However, the disulfide bonds are not absolutely essential, as some activity and growth are detected in the absence of each disulfide bond.

The protein localises to the cell inner membrane. The catalysed reaction is ATP + protein L-histidine = ADP + protein N-phospho-L-histidine.. Functionally, member of the two-component regulatory system VxrB/VxrA involved in the regulation of diverses processes, including virulence, the type VI secretion system (T6SS) and biofilm formation. Functions as a sensor protein kinase which is autophosphorylated at a histidine residue and transfers its phosphate group to the conserved aspartic acid residue in the regulatory domain of VxrB. Is critical for colonization in the infant mouse model. Contributes to the resistance to beta-lactam treatment. This chain is Sensor histidine kinase VxrA, found in Vibrio cholerae serotype O1 (strain ATCC 39315 / El Tor Inaba N16961).